A 233-amino-acid polypeptide reads, in one-letter code: LexA repressor (233 aa).

The H-T-H motif DNA-binding region spans Phe26–Thr46. Catalysis depends on for autocatalytic cleavage activity residues Ser154 and Lys192.

This sequence belongs to the peptidase S24 family. Homodimer.

It carries out the reaction Hydrolysis of Ala-|-Gly bond in repressor LexA.. In terms of biological role, represses a number of genes involved in the response to DNA damage (SOS response), including recA and lexA. In the presence of single-stranded DNA, RecA interacts with LexA causing an autocatalytic cleavage which disrupts the DNA-binding part of LexA, leading to derepression of the SOS regulon and eventually DNA repair. In Roseobacter denitrificans (strain ATCC 33942 / OCh 114) (Erythrobacter sp. (strain OCh 114)), this protein is LexA repressor.